The sequence spans 390 residues: AIATVITFLILFTIFGNSLVILAVLTSRSLRAPQNLFLVSLAAADIMVATLIIPFSLANELLGYWYFRRTWCEVYLALDVLFCTSSIVHLCAISLDRYWAVSRALEYNSKRTPRRIKCIILTVWLIAAAISLPPLIYKGDQGPQPRGRPQCKLNQEAWYILSSSIGSFFAPCLIMILVYLRIYLIAKRSHRRGPGAKGGPRKGESKQPHSLDSGPSALANLPTLASSLAVAGEANGHSMPPGEKERETSEDPGTPTLPPSWPVLPNSGQGQKGGVCGASLEEEADKEEEEECGPPAVPASPATACNPPLQQPQGSQVLATLRGQVFLGRGVGAAGGQWWRRWAQLTREKRFTFVLAVVIGVFVLCWFPFFFSYSLGAICPQHCKVPHGLF.

A helical membrane pass occupies residues 1–25; the sequence is AIATVITFLILFTIFGNSLVILAVL. The Cytoplasmic segment spans residues 26–36; sequence TSRSLRAPQNL. A helical transmembrane segment spans residues 37–62; it reads FLVSLAAADIMVATLIIPFSLANELL. Over 63 to 72 the chain is Extracellular; the sequence is GYWYFRRTWC. Cys-72 and Cys-151 form a disulfide bridge. Residues 73-95 traverse the membrane as a helical segment; that stretch reads EVYLALDVLFCTSSIVHLCAISL. Residues 96–117 lie on the Cytoplasmic side of the membrane; it reads DRYWAVSRALEYNSKRTPRRIK. The chain crosses the membrane as a helical span at residues 118–140; it reads CIILTVWLIAAAISLPPLIYKGD. Over 141–156 the chain is Extracellular; that stretch reads QGPQPRGRPQCKLNQE. A helical transmembrane segment spans residues 157 to 180; it reads AWYILSSSIGSFFAPCLIMILVYL. Over 181–354 the chain is Cytoplasmic; it reads RIYLIAKRSH…LTREKRFTFV (174 aa). Disordered stretches follow at residues 191–218 and 233–311; these read RRGP…PSAL and EANG…PLQQ. Over residues 280–292 the composition is skewed to acidic residues; that stretch reads LEEEADKEEEEEC. A helical transmembrane segment spans residues 355 to 378; it reads LAVVIGVFVLCWFPFFFSYSLGAI. Over 379 to 390 the chain is Extracellular; the sequence is CPQHCKVPHGLF.

Belongs to the G-protein coupled receptor 1 family. Adrenergic receptor subfamily. ADRA2B sub-subfamily. As to quaternary structure, interacts with RAB26. Interacts with PPP1R9B. Interacts with GGA1, GGA2 and GGA3.

It is found in the cell membrane. In terms of biological role, alpha-2 adrenergic receptors mediate the catecholamine-induced inhibition of adenylate cyclase through the action of G proteins. This chain is Alpha-2B adrenergic receptor (ADRA2B), found in Dugong dugon (Dugong).